The primary structure comprises 105 residues: Large ribosomal subunit protein eL30 (105 aa).

Glycyl lysine isopeptide (Lys-Gly) (interchain with G-Cter in ubiquitin) cross-links involve residues Lys22, Lys53, and Lys83.

Belongs to the eukaryotic ribosomal protein eL30 family. In terms of assembly, component of the large ribosomal subunit (LSU). Mature yeast ribosomes consist of a small (40S) and a large (60S) subunit. The 40S small subunit contains 1 molecule of ribosomal RNA (18S rRNA) and 33 different proteins (encoded by 57 genes). The large 60S subunit contains 3 rRNA molecules (25S, 5.8S and 5S rRNA) and 46 different proteins (encoded by 81 genes).

The protein localises to the cytoplasm. In terms of biological role, component of the ribosome, a large ribonucleoprotein complex responsible for the synthesis of proteins in the cell. The small ribosomal subunit (SSU) binds messenger RNAs (mRNAs) and translates the encoded message by selecting cognate aminoacyl-transfer RNA (tRNA) molecules. The large subunit (LSU) contains the ribosomal catalytic site termed the peptidyl transferase center (PTC), which catalyzes the formation of peptide bonds, thereby polymerizing the amino acids delivered by tRNAs into a polypeptide chain. The nascent polypeptides leave the ribosome through a tunnel in the LSU and interact with protein factors that function in enzymatic processing, targeting, and the membrane insertion of nascent chains at the exit of the ribosomal tunnel. This is Large ribosomal subunit protein eL30 from Saccharomyces cerevisiae (strain ATCC 204508 / S288c) (Baker's yeast).